The following is a 257-amino-acid chain: Acetylglutamate kinase (257 aa).

Substrate-binding positions include glycine 41–glycine 42, arginine 63, and asparagine 155.

Belongs to the acetylglutamate kinase family. ArgB subfamily.

It localises to the cytoplasm. The enzyme catalyses N-acetyl-L-glutamate + ATP = N-acetyl-L-glutamyl 5-phosphate + ADP. It participates in amino-acid biosynthesis; L-arginine biosynthesis; N(2)-acetyl-L-ornithine from L-glutamate: step 2/4. Functionally, catalyzes the ATP-dependent phosphorylation of N-acetyl-L-glutamate. The protein is Acetylglutamate kinase of Solibacter usitatus (strain Ellin6076).